The sequence spans 305 residues: Insulin-like growth factor-binding protein 2 (305 aa).

An N-terminal signal peptide occupies residues 1-34 (MLPRLGGPALPLLLPSLLLLLLLGAGGCGPGVRA). An IGFBP N-terminal domain is found at 36–118 (VLFRCPPCTP…VTGAGTCEKR (83 aa)). 9 disulfide bridges follow: cysteine 40–cysteine 68, cysteine 43–cysteine 70, cysteine 51–cysteine 71, cysteine 59–cysteine 74, cysteine 82–cysteine 95, cysteine 89–cysteine 115, cysteine 207–cysteine 241, cysteine 252–cysteine 263, and cysteine 265–cysteine 286. One can recognise a Thyroglobulin type-1 domain in the interval 204–286 (RTPCQQELDQ…APTIRGDPEC (83 aa)). The Cell attachment site motif lies at 281 to 283 (RGD).

Interacts with IGF1. Interacts with IGF2. Interacts (via RGD motif) with integrin alpha5/ITGA5; this interaction induces cell migration, adhesion or apoptosis according to the context. Interacts with PTPRB; this interaction leads to PTPRB dimerization and inactivation. In terms of processing, cleaved by MMP9 leading to release of free IGF2 from IGFBP2-IGF2 complex, which contributes to enhance the motility and the growth of astrocytes. O-glycosylated. Highly expressed in adult liver, but also in kidney, lung, brain, spleen, testis and ovary.

It localises to the secreted. Multifunctional protein that plays a critical role in regulating the availability of IGFs such as IGF1 and IGF2 to their receptors and thereby regulates IGF-mediated cellular processes including proliferation, differentiation, and apoptosis in a cell-type specific manner. Functions coordinately with receptor protein tyrosine phosphatase beta/PTPRB and the IGF1 receptor to regulate IGF1-mediated signaling by stimulating the phosphorylation of PTEN leading to its inactivation and AKT1 activation. Plays a positive role in cell migration via interaction with integrin alpha5/ITGA5 through an RGD motif. Additionally, interaction with ITGA5/ITGB1 enhances the adhesion of endothelial progenitor cells to endothelial cells. Upon mitochondrial damage, facilitates apoptosis with ITGA5 of podocytes, and then activates the phosphorylation of focal adhesion kinase (FAK)-mediated mitochondrial injury. The polypeptide is Insulin-like growth factor-binding protein 2 (Igfbp2) (Mus musculus (Mouse)).